Consider the following 525-residue polypeptide: Putative ribose/galactose/methyl galactoside import ATP-binding protein (525 aa).

Over residues 1–15 (MFGSATANPPAQRNL) the composition is skewed to polar residues. The tract at residues 1-23 (MFGSATANPPAQRNLPSGDGDGG) is disordered. ABC transporter domains are found at residues 33–269 (LEIS…VGRE) and 279–523 (KPAG…SGHK). Residue 65-72 (GENGAGKS) coordinates ATP.

The protein belongs to the ABC transporter superfamily. Carbohydrate importer 2 (CUT2) (TC 3.A.1.2) family.

Its subcellular location is the cell inner membrane. It catalyses the reaction D-ribose(out) + ATP + H2O = D-ribose(in) + ADP + phosphate + H(+). The enzyme catalyses D-galactose(out) + ATP + H2O = D-galactose(in) + ADP + phosphate + H(+). Functionally, part of an ABC transporter complex involved in carbohydrate import. Could be involved in ribose, galactose and/or methyl galactoside import. Responsible for energy coupling to the transport system. The chain is Putative ribose/galactose/methyl galactoside import ATP-binding protein from Pseudomonas syringae pv. syringae (strain B728a).